A 230-amino-acid polypeptide reads, in one-letter code: Maleylacetoacetate isomerase (230 aa).

The region spanning 7–95 (LRVTLYTYFR…YLDEAFPDNP (89 aa)) is the GST N-terminal domain. Glutathione contacts are provided by residues 17 to 22 (SSCSAR), Gln-46, Val-60, 79 to 80 (QS), Gln-123, and 127 to 129 (NLR). Positions 104-226 (NPQQRALVRS…HWRTQQDTPT (123 aa)) constitute a GST C-terminal domain.

This sequence belongs to the GST superfamily. Zeta family. Requires glutathione as cofactor.

The protein localises to the cytoplasm. It catalyses the reaction 4-maleylacetoacetate = 4-fumarylacetoacetate. Its pathway is amino-acid degradation; L-phenylalanine degradation; acetoacetate and fumarate from L-phenylalanine: step 5/6. The protein is Maleylacetoacetate isomerase (maiA) of Emericella nidulans (strain FGSC A4 / ATCC 38163 / CBS 112.46 / NRRL 194 / M139) (Aspergillus nidulans).